Here is a 459-residue protein sequence, read N- to C-terminus: Vitamin K-dependent protein C (459 aa).

The first 18 residues, Met1–Ser18, serve as a signal peptide directing secretion. Positions Thr19–Arg41 are excised as a propeptide. The region spanning Ala42–Asp87 is the Gla domain. Residues Glu47, Glu48, Glu55, Glu57, Glu60, Glu61, Glu66, Glu67, Glu70, and Glu76 each carry the 4-carboxyglutamate modification. An intrachain disulfide couples Cys58 to Cys63. 4 cysteine pairs are disulfide-bonded: Cys91/Cys110, Cys100/Cys105, Cys104/Cys119, and Cys121/Cys130. 2 EGF-like domains span residues Pro96–Leu131 and Arg135–Glu175. Asp112 is modified ((3R)-3-hydroxyaspartate). Asn138 carries an N-linked (GlcNAc...) asparagine glycan. Intrachain disulfides connect Cys139-Cys150, Cys146-Cys159, Cys161-Cys174, Cys182-Cys321, and Cys240-Cys256. The region spanning Leu214 to Arg448 is the Peptidase S1 domain. The active-site Charge relay system is the His255. The N-linked (GlcNAc...) asparagine glycan is linked to Asn292. The active-site Charge relay system is the Asp301. Asn353 is a glycosylation site (N-linked (GlcNAc...) asparagine). 2 disulfide bridges follow: Cys371–Cys385 and Cys396–Cys424. The active-site Charge relay system is Ser400.

The protein belongs to the peptidase S1 family. In terms of assembly, synthesized as a single chain precursor, which is cleaved into a light chain and a heavy chain held together by a disulfide bond. The enzyme is then activated by thrombin, which cleaves a tetradecapeptide from the amino end of the heavy chain; this reaction, which occurs at the surface of endothelial cells, is strongly promoted by thrombomodulin. Post-translationally, the vitamin K-dependent, enzymatic carboxylation of some Glu residues allows the modified protein to bind calcium. In terms of processing, the iron and 2-oxoglutarate dependent 3-hydroxylation of aspartate and asparagine is (R) stereospecific within EGF domains. In terms of tissue distribution, plasma; synthesized in the liver.

It localises to the secreted. It is found in the golgi apparatus. The protein localises to the endoplasmic reticulum. It catalyses the reaction Degradation of blood coagulation factors Va and VIIIa.. Its function is as follows. Protein C is a vitamin K-dependent serine protease that regulates blood coagulation by inactivating factors Va and VIIIa in the presence of calcium ions and phospholipids. Exerts a protective effect on the endothelial cell barrier function. The protein is Vitamin K-dependent protein C (PROC) of Sus scrofa (Pig).